Here is a 444-residue protein sequence, read N- to C-terminus: tRNA modification GTPase MnmE (444 aa).

Positions 23, 82, and 121 each coordinate (6S)-5-formyl-5,6,7,8-tetrahydrofolate. The TrmE-type G domain maps to 216-365 (GTSIVLAGLP…LKQALQKWLN (150 aa)). A K(+)-binding site is contributed by Asn-226. Residues 226 to 231 (NAGKSS), 245 to 251 (TDIPGTT), and 270 to 273 (DSAG) contribute to the GTP site. Ser-230 contributes to the Mg(2+) binding site. Positions 245, 247, and 250 each coordinate K(+). Residue Thr-251 participates in Mg(2+) binding. Position 444 (Lys-444) interacts with (6S)-5-formyl-5,6,7,8-tetrahydrofolate.

It belongs to the TRAFAC class TrmE-Era-EngA-EngB-Septin-like GTPase superfamily. TrmE GTPase family. In terms of assembly, homodimer. Heterotetramer of two MnmE and two MnmG subunits. It depends on K(+) as a cofactor.

Its subcellular location is the cytoplasm. Exhibits a very high intrinsic GTPase hydrolysis rate. Involved in the addition of a carboxymethylaminomethyl (cmnm) group at the wobble position (U34) of certain tRNAs, forming tRNA-cmnm(5)s(2)U34. This is tRNA modification GTPase MnmE from Chlamydia trachomatis serovar L2 (strain ATCC VR-902B / DSM 19102 / 434/Bu).